Consider the following 1122-residue polypeptide: Histone deacetylase 5 (1122 aa).

The tract at residues 1–22 (MNSPNESDGMSGREPSLEILPR) is disordered. K35 is covalently cross-linked (Glycyl lysine isopeptide (Lys-Gly) (interchain with G-Cter in SUMO2)). Residues 196 to 281 (KEPTPGGLNH…KVAERRSSPL (86 aa)) form a disordered region. Basic and acidic residues predominate over residues 247–258 (DSRDDFPLRKTA). The residue at position 259 (S259) is a Phosphoserine; by AMPK, CaMK1, SIK1 and PKD/PRKD1. The segment covering 272 to 281 (KVAERRSSPL) has biased composition (basic and acidic residues). The residue at position 292 (T292) is a Phosphothreonine; by PKC. 2 disordered regions span residues 302-343 (GAGP…NIPT) and 481-504 (MRTV…LPQS). The span at 312-327 (NSAPGSGPSSPNSSHS) shows a compositional bias: low complexity. Residues 328–340 (TIAENGFTGSVPN) show a composition bias toward polar residues. Residues 494-504 (SRTQSSPLPQS) show a composition bias toward low complexity. S498 carries the phosphoserine; by AMPK, CaMK1, SIK1 and PKD/PRKD1 modification. N6-acetyllysine is present on K533. The tract at residues 536–625 (TKTGELPRQP…GPDLEEPGAG (90 aa)) is disordered. Residues 581-621 (STQEDLEEEDEEEDGEEEEDCIQVKDEEGESGAEEGPDLEE) show a composition bias toward acidic residues. S611 and S661 each carry phosphoserine. Residues 684-1028 (GVVYDTFMLK…VSALLSVELQ (345 aa)) form a histone deacetylase region. The Zn(2+) site is built by C696, C698, H704, and C781. H833 is a catalytic residue. The Nuclear export signal signature appears at 1081–1122 (EEAETVSAMALLSVGAEQAQAAAAREHSPRPAEEPMEQEPAL). Positions 1097–1122 (EQAQAAAAREHSPRPAEEPMEQEPAL) are disordered. A compositionally biased stretch (basic and acidic residues) spans 1104-1113 (AREHSPRPAE). S1108 bears the Phosphoserine mark.

This sequence belongs to the histone deacetylase family. HD type 2 subfamily. In terms of assembly, interacts with AHRR, BAHD1, BCOR, HDAC7, HDAC9, CTBP1, MEF2C, NCOR2, NRIP1, PHB2 and a 14-3-3 chaperone protein. Interacts with BCL6, DDIT3/CHOP, GRK5, KDM5B and MYOCD. Interacts with EP300 in the presence of TFAP2C. Interacts with ANKRA2. Interacts with CUL7 (as part of the 3M complex); negatively regulated by ANKRA2. Interacts with ZBTB7B; the interaction allows the recruitment of HDAC4 on CD8 loci for deacetylation and possible inhibition of CD8 genes expression. Interacts with RARA. Post-translationally, phosphorylated by AMPK, CaMK1, SIK1 and PRKD1 at Ser-259 and Ser-498. The phosphorylation is required for the export to the cytoplasm and inhibition. Phosphorylated by the PKC kinases PKN1 and PKN2, impairing nuclear import. Phosphorylated by GRK5, leading to nuclear export of HDAC5 and allowing MEF2-mediated transcription. In terms of processing, ubiquitinated. Polyubiquitination however does not lead to its degradation.

The protein localises to the nucleus. Its subcellular location is the cytoplasm. The catalysed reaction is N(6)-acetyl-L-lysyl-[histone] + H2O = L-lysyl-[histone] + acetate. In terms of biological role, responsible for the deacetylation of lysine residues on the N-terminal part of the core histones (H2A, H2B, H3 and H4). Histone deacetylation gives a tag for epigenetic repression and plays an important role in transcriptional regulation, cell cycle progression and developmental events. Histone deacetylases act via the formation of large multiprotein complexes. Involved in muscle maturation by repressing transcription of myocyte enhancer MEF2C. During muscle differentiation, it shuttles into the cytoplasm, allowing the expression of myocyte enhancer factors. Serves as a corepressor of RARA and causes its deacetylation. In association with RARA, plays a role in the repression of microRNA-10a and thereby in the inflammatory response. The polypeptide is Histone deacetylase 5 (HDAC5) (Pongo abelii (Sumatran orangutan)).